The sequence spans 91 residues: UPF0250 protein NMC1112 (91 aa).

This sequence belongs to the UPF0250 family.

The sequence is that of UPF0250 protein NMC1112 from Neisseria meningitidis serogroup C / serotype 2a (strain ATCC 700532 / DSM 15464 / FAM18).